The sequence spans 603 residues: Translation initiation factor IF-2 (603 aa).

The region spanning 112 to 279 (TRPPIITIMG…NINLQAEILD (168 aa)) is the tr-type G domain. Residues 121-128 (GHVDHGKT) are G1. 121–128 (GHVDHGKT) contributes to the GTP binding site. The interval 146 to 150 (GITQH) is G2. The segment at 167 to 170 (DTPG) is G3. GTP contacts are provided by residues 167-171 (DTPGH) and 221-224 (NKMD). Residues 221-224 (NKMD) form a G4 region. A G5 region spans residues 257–259 (SAL).

This sequence belongs to the TRAFAC class translation factor GTPase superfamily. Classic translation factor GTPase family. IF-2 subfamily.

The protein resides in the cytoplasm. Functionally, one of the essential components for the initiation of protein synthesis. Protects formylmethionyl-tRNA from spontaneous hydrolysis and promotes its binding to the 30S ribosomal subunits. Also involved in the hydrolysis of GTP during the formation of the 70S ribosomal complex. This chain is Translation initiation factor IF-2, found in Mycoplasmopsis pulmonis (strain UAB CTIP) (Mycoplasma pulmonis).